Reading from the N-terminus, the 308-residue chain is Malonate utilization transcriptional regulator (308 aa).

An HTH lysR-type domain is found at 9-66 (ITFRKLSVFMMFMAKGNIARTAEAMKLSSVSVHRALHTLEEGVGCPLFVHKGRNLLPL). Residues 26–45 (IARTAEAMKLSSVSVHRALH) constitute a DNA-binding region (H-T-H motif).

The protein belongs to the LysR transcriptional regulatory family.

In terms of biological role, transcriptional regulator of the mau genes for malonate utilization. The sequence is that of Malonate utilization transcriptional regulator (mauR) from Klebsiella pneumoniae.